A 249-amino-acid polypeptide reads, in one-letter code: Phosphate import ATP-binding protein PstB 3 (249 aa).

In terms of domain architecture, ABC transporter spans 4–244 (LVINNLDLYY…PQDERTENYI (241 aa)). Residue 36 to 43 (GPSGCGKS) participates in ATP binding.

The protein belongs to the ABC transporter superfamily. Phosphate importer (TC 3.A.1.7) family. In terms of assembly, the complex is composed of two ATP-binding proteins (PstB), two transmembrane proteins (PstC and PstA) and a solute-binding protein (PstS).

Its subcellular location is the cell membrane. The enzyme catalyses phosphate(out) + ATP + H2O = ADP + 2 phosphate(in) + H(+). Functionally, part of the ABC transporter complex PstSACB involved in phosphate import. Responsible for energy coupling to the transport system. The polypeptide is Phosphate import ATP-binding protein PstB 3 (Streptococcus agalactiae serotype Ia (strain ATCC 27591 / A909 / CDC SS700)).